Consider the following 231-residue polypeptide: Uracil-DNA glycosylase (231 aa).

Asp74 serves as the catalytic Proton acceptor.

The protein belongs to the uracil-DNA glycosylase (UDG) superfamily. UNG family.

The protein localises to the cytoplasm. It catalyses the reaction Hydrolyzes single-stranded DNA or mismatched double-stranded DNA and polynucleotides, releasing free uracil.. Excises uracil residues from the DNA which can arise as a result of misincorporation of dUMP residues by DNA polymerase or due to deamination of cytosine. The sequence is that of Uracil-DNA glycosylase from Campylobacter jejuni (strain RM1221).